The primary structure comprises 279 residues: Tetra-spanning protein 1 (279 aa).

Helical transmembrane passes span 25-45 and 50-70; these read VWFSGQVIVLISSVLYALQAI and APPFLFKSAAFGAIVAYAIVL. An N-linked (GlcNAc...) asparagine glycan is attached at Asn-77. The chain crosses the membrane as a helical span at residues 100 to 122; the sequence is YFILALSMLIDRPILFSLAPYAI. Residue Asn-143 is glycosylated (N-linked (GlcNAc...) asparagine). The chain crosses the membrane as a helical span at residues 172 to 192; that stretch reads MQLVASLETFLLFRLFFGVFL. The interval 260–279 is disordered; the sequence is VGTAQSRPTASSSTTAPSST. The span at 262–279 shows a compositional bias: low complexity; sequence TAQSRPTASSSTTAPSST.

It belongs to the PER33/POM33 family. In terms of assembly, interacts with RTN1 and YOP1.

The protein resides in the golgi apparatus membrane. Its subcellular location is the endoplasmic reticulum membrane. It is found in the nucleus membrane. Its function is as follows. Required for the correct positioning of the cellular division plane by delimiting the actomyosin ring assembly at the cell equator. This Schizosaccharomyces pombe (strain 972 / ATCC 24843) (Fission yeast) protein is Tetra-spanning protein 1 (tts1).